We begin with the raw amino-acid sequence, 660 residues long: DNA mismatch repair protein MutL (660 aa).

The disordered stretch occupies residues 408–436 (DQTSASASVKHASRSQDENQLSEHPNLDF). Over residues 425-436 (ENQLSEHPNLDF) the composition is skewed to polar residues.

Belongs to the DNA mismatch repair MutL/HexB family.

Functionally, this protein is involved in the repair of mismatches in DNA. It is required for dam-dependent methyl-directed DNA mismatch repair. May act as a 'molecular matchmaker', a protein that promotes the formation of a stable complex between two or more DNA-binding proteins in an ATP-dependent manner without itself being part of a final effector complex. This chain is DNA mismatch repair protein MutL, found in Streptococcus uberis (strain ATCC BAA-854 / 0140J).